We begin with the raw amino-acid sequence, 228 residues long: Prolactin (228 aa).

The N-terminal stretch at 1–29 (MCTKRSSLKGSLLLLLLISSLLLSRSVDS) is a signal peptide. An intrachain disulfide couples cysteine 33 to cysteine 40. A phosphoserine mark is found at serine 55, serine 63, and serine 119. 2 disulfide bridges follow: cysteine 87–cysteine 203 and cysteine 220–cysteine 228.

Belongs to the somatotropin/prolactin family. As to quaternary structure, interacts with PRLR.

The protein resides in the secreted. Its function is as follows. Prolactin acts primarily on the mammary gland by promoting lactation. The sequence is that of Prolactin (PRL) from Isoodon macrourus (Short-nosed bandicoot).